Reading from the N-terminus, the 257-residue chain is Type III pantothenate kinase (257 aa).

5–12 (DIGNTNIK) is an ATP binding site. A substrate-binding site is contributed by 107 to 110 (GSDR). Residue Asp-109 is the Proton acceptor of the active site. Residue Thr-133 coordinates ATP.

It belongs to the type III pantothenate kinase family. As to quaternary structure, homodimer. Requires NH4(+) as cofactor. The cofactor is K(+).

It localises to the cytoplasm. It carries out the reaction (R)-pantothenate + ATP = (R)-4'-phosphopantothenate + ADP + H(+). The protein operates within cofactor biosynthesis; coenzyme A biosynthesis; CoA from (R)-pantothenate: step 1/5. Functionally, catalyzes the phosphorylation of pantothenate (Pan), the first step in CoA biosynthesis. The polypeptide is Type III pantothenate kinase (Ehrlichia ruminantium (strain Gardel)).